The primary structure comprises 358 residues: 3-dehydroquinate synthase (358 aa).

Residues 70 to 75 (DGEQFK), 104 to 108 (GVIGD), 128 to 129 (TT), Lys141, Lys150, and 168 to 171 (CLHT) each bind NAD(+). 3 residues coordinate Zn(2+): Glu183, His246, and His263.

Belongs to the sugar phosphate cyclases superfamily. Dehydroquinate synthase family. The cofactor is Co(2+). It depends on Zn(2+) as a cofactor. NAD(+) is required as a cofactor.

It is found in the cytoplasm. The catalysed reaction is 7-phospho-2-dehydro-3-deoxy-D-arabino-heptonate = 3-dehydroquinate + phosphate. It functions in the pathway metabolic intermediate biosynthesis; chorismate biosynthesis; chorismate from D-erythrose 4-phosphate and phosphoenolpyruvate: step 2/7. In terms of biological role, catalyzes the conversion of 3-deoxy-D-arabino-heptulosonate 7-phosphate (DAHP) to dehydroquinate (DHQ). This is 3-dehydroquinate synthase from Shewanella baltica (strain OS155 / ATCC BAA-1091).